We begin with the raw amino-acid sequence, 430 residues long: POU domain, class 2, transcription factor 3 (430 aa).

Disordered stretches follow at residues 1–40 (MVNL…NGLD), 60–81 (HRPC…SGDM), 129–180 (LLLP…EPTD), and 248–267 (DAES…YPTL). Composition is skewed to polar residues over residues 23 to 32 (ARSTFGQVES) and 67 to 78 (QGPTMMPGNQMS). A compositionally biased stretch (low complexity) spans 129-139 (LLLPQTGPGLT). The region spanning 176–250 (DEPTDLEELE…LLEKWLNDAE (75 aa)) is the POU-specific domain. Residues 251-267 (SSPSDPSASTPSSYPTL) show a composition bias toward low complexity. A DNA-binding region (homeobox) is located at residues 274 to 333 (KRKKRTSIETNIRLTLEKRFQDNPKPSSEEISMIAEQLSMEKEVVRVWFCNRRQKEKRIN). Low complexity-rich tracts occupy residues 355–364 (SLGSLSVPPV) and 374–390 (SSCS…PGSG). The tract at residues 355–413 (SLGSLSVPPVHSTMPGTVTSSCSPGNNSRPSSPGSGLHASSPTASQNNSKAAMNPSSAA) is disordered. A compositionally biased stretch (polar residues) spans 392–413 (HASSPTASQNNSKAAMNPSSAA).

Belongs to the POU transcription factor family. Class-2 subfamily. In terms of assembly, interacts (via the POU domain) with POU2AF1 and POU2AF2 in a DNA-dependent manner; this interaction recruits POU2AF2 to chromatin and increases POU2F3 transactivation activity. Expressed in epidermis and hair follicles.

It localises to the nucleus. Transcription factor that binds to the octamer motif (5'-ATTTGCAT-3') and regulates cell type-specific differentiation pathways. Involved in the regulation of keratinocytes differentiation. The POU2F3-POU2AF2/POU2AF3 complex drives the expression of tuft-cell-specific genes, a rare chemosensory cells that coordinate immune and neural functions within mucosal epithelial tissues. Its function is as follows. Inhibits transactivation by POU2F1. The sequence is that of POU domain, class 2, transcription factor 3 (Pou2f3) from Rattus norvegicus (Rat).